A 712-amino-acid chain; its full sequence is MTSDEKSATRDIYDPNTLPDYDREFIEPDDLRQFEKALNAPEAAPLVALNDWRPVNQRVRKSRRTKPRRSKDETREGVLYTVLKWPFLFTVFAWITVLGFAYTLTRLYIFLYEQFVTWRGKREQLRRELSMQTNYQDWLKAAQALDTYLGNLKWKETDEYAYYDHLTINKVVAQLKQTRKAAEMEMQNGRPGLSDPPAVEELCFLLEACVKNNFAGVENPRLYSETYSGTKDLVQEYIDEVHSCIRLVLDSKQISNEDKYQFFKHLDTNFGRTALCLSGGATFAYYHFGVIRALLDNDVLPEIITGTSGGALVAALVATRTDEELKQLLVPALAHRIRACHEGFTTWVRRWWRTGARFDTLDWARQCSWFCRGSTTFREAYERTGRILNVSCVPSDPHSPTILANYLTSPDCVIWSAVLASAAVPGILNPVVLMTKKRDGTLAPYSFGHKWKDGSLRTDIPIKALNLHFNVNFTIVSQVNPHINLFFFNSRGSVGRPVTHRKGRGWRGGFLGSAIEQYIKLDMNKWLRVLRHLELLPRPLGQDWSEIWLQKFSGTITIWPKSIPSDFYHILSDPSPERLARMLHVGKQSAFPKIQFIKNRLKIENAIMQGLQQCSSGGGRVMSPILSRRRQDRAQEHADRMVERLDQSFPERQSDYKDESHYAEVSDSLSATSSRPHTPDARRSSMFEEMRRQSAVFFDDPDMYADEDAVTT.

Residues 1 to 13 (MTSDEKSATRDIY) are compositionally biased toward basic and acidic residues. Positions 1 to 20 (MTSDEKSATRDIYDPNTLPD) are disordered. A helical membrane pass occupies residues 85 to 105 (WPFLFTVFAWITVLGFAYTLT). The 192-residue stretch at 275-466 (LCLSGGATFA…RTDIPIKALN (192 aa)) folds into the PNPLA domain. Residues 306–310 (GTSGG) carry the GXSXG motif. The active-site Nucleophile is the S308. D453 (proton acceptor) is an active-site residue. Positions 628 to 688 (RRRQDRAQEH…PDARRSSMFE (61 aa)) are disordered. Composition is skewed to basic and acidic residues over residues 632–646 (DRAQEHADRMVERLD) and 652–664 (RQSDYKDESHYAE). Over residues 667–676 (DSLSATSSRP) the composition is skewed to polar residues. Residues 677 to 688 (HTPDARRSSMFE) are compositionally biased toward basic and acidic residues.

The protein belongs to the PLPL family.

Its subcellular location is the membrane. Functionally, probable lipid hydrolase. The polypeptide is Patatin-like phospholipase domain-containing protein AFUA_1G04970 (Aspergillus fumigatus (strain ATCC MYA-4609 / CBS 101355 / FGSC A1100 / Af293) (Neosartorya fumigata)).